A 190-amino-acid polypeptide reads, in one-letter code: Threonylcarbamoyl-AMP synthase (190 aa).

Residues 9 to 190 enclose the YrdC-like domain; it reads FLQLALARQT…IDIVTGQQFR (182 aa).

It belongs to the SUA5 family. TsaC subfamily.

The protein resides in the cytoplasm. It carries out the reaction L-threonine + hydrogencarbonate + ATP = L-threonylcarbamoyladenylate + diphosphate + H2O. Its function is as follows. Required for the formation of a threonylcarbamoyl group on adenosine at position 37 (t(6)A37) in tRNAs that read codons beginning with adenine. Catalyzes the conversion of L-threonine, HCO(3)(-)/CO(2) and ATP to give threonylcarbamoyl-AMP (TC-AMP) as the acyladenylate intermediate, with the release of diphosphate. This Marinobacter nauticus (strain ATCC 700491 / DSM 11845 / VT8) (Marinobacter aquaeolei) protein is Threonylcarbamoyl-AMP synthase.